Here is a 227-residue protein sequence, read N- to C-terminus: Venom allergen 5 (227 aa).

Residues 1–23 (MEISGLVYLIIIVTIIDLPYGKA) form the signal peptide. Intrachain disulfides connect Cys27–Cys40, Cys31–Cys124, Cys49–Cys117, and Cys193–Cys210. Residues 68–212 (LKEHNDFRQK…WHYHYLVCNY (145 aa)) form the SCP domain.

Belongs to the CRISP family. Venom allergen 5-like subfamily. As to expression, expressed by the venom gland.

Its subcellular location is the secreted. In Vespula maculifrons (Eastern yellow jacket), this protein is Venom allergen 5.